The sequence spans 363 residues: Chorismate synthase (363 aa).

Residues R48 and R54 each coordinate NADP(+). Residues 125–127 (RSS), 237–238 (NA), G277, 292–296 (KPTSS), and R318 contribute to the FMN site.

The protein belongs to the chorismate synthase family. As to quaternary structure, homotetramer. It depends on FMNH2 as a cofactor.

The catalysed reaction is 5-O-(1-carboxyvinyl)-3-phosphoshikimate = chorismate + phosphate. It participates in metabolic intermediate biosynthesis; chorismate biosynthesis; chorismate from D-erythrose 4-phosphate and phosphoenolpyruvate: step 7/7. In terms of biological role, catalyzes the anti-1,4-elimination of the C-3 phosphate and the C-6 proR hydrogen from 5-enolpyruvylshikimate-3-phosphate (EPSP) to yield chorismate, which is the branch point compound that serves as the starting substrate for the three terminal pathways of aromatic amino acid biosynthesis. This reaction introduces a second double bond into the aromatic ring system. This Pseudomonas fluorescens (strain Pf0-1) protein is Chorismate synthase.